Consider the following 419-residue polypeptide: Oligouridylate-binding protein 1B (419 aa).

RRM domains lie at 54–128 (RSVY…WAYA) and 139–217 (FNIF…WATK). Positions 217–257 (KGATSGEDKQSSDSKSVVELTSGVSEDGKDTTNGEAPENNA) are disordered. A Phosphoserine modification is found at Ser241. The 76-residue stretch at 260–335 (TTVYVGNLAP…RQMKCSWGSK (76 aa)) folds into the RRM 3 domain.

In terms of assembly, interacts with UBA1A and UBA2A.

The protein localises to the nucleus. Functionally, heterogeneous nuclear ribonucleoprotein (hnRNP)-like protein that acts as a component of the pre-mRNA processing machinery. Functions to facilitate the nuclear maturation of plant pre-mRNAs. The chain is Oligouridylate-binding protein 1B (UBP1B) from Arabidopsis thaliana (Mouse-ear cress).